The sequence spans 296 residues: Diguanylate cyclase DgcZ (296 aa).

Residues histidine 22, cysteine 52, histidine 79, and histidine 83 each coordinate Zn(2+). One can recognise a GGDEF domain in the interval 157 to 289; the sequence is LNLYLMLLDI…GRNRCMFIDE (133 aa). Mg(2+)-binding residues include aspartate 165 and isoleucine 166. Residues asparagine 173, histidine 178, aspartate 182, and 195-200 each bind substrate; that span reads WTRDYE. Glutamate 208 serves as a coordination point for Mg(2+). Residue glutamate 208 is the Proton acceptor of the active site. Residues lysine 215, arginine 224, and arginine 228 each contribute to the substrate site.

In terms of assembly, homodimer. Requires Mg(2+) as cofactor.

The catalysed reaction is 2 GTP = 3',3'-c-di-GMP + 2 diphosphate. Its pathway is purine metabolism; 3',5'-cyclic di-GMP biosynthesis. Its activity is regulated as follows. Allosterically regulated by zinc, which seems to regulate the activity of the catalytic GGDEF domains by impeding their mobility and thus preventing productive encounter of the two GTP substrates. Subject to product inhibition by c-di-GMP at a KI of 44 uM. Its function is as follows. Catalyzes the synthesis of cyclic-di-GMP (c-di-GMP) via the condensation of 2 GTP molecules. May act as a zinc sensor that controls, via c-di-GMP, post-translational events. Overexpression leads to a strong repression of swimming; swimming returnes to normal when residues 206-207 are both mutated to Ala. Overexpression also leads to a reduction in flagellar abundance and a 20-fold increase in c-di-GMP levels in vivo. Required for aminoglycoside-mediated induction of biofilm formation, it also plays a lesser role in biofilm production in response to other classes of translation inhibitors. The c-di-GMP produced by this enzyme up-regulates poly-GlcNAc production as well as the biofilm synthesis protein PgaD, although c-di-GMP is probably not the main inducing principle. C-di-GMP is a second messenger which controls cell surface-associated traits in bacteria. This Escherichia coli (strain K12) protein is Diguanylate cyclase DgcZ.